Here is a 466-residue protein sequence, read N- to C-terminus: Proline--tRNA ligase (466 aa).

The protein belongs to the class-II aminoacyl-tRNA synthetase family. ProS type 3 subfamily. As to quaternary structure, homodimer.

The protein resides in the cytoplasm. It carries out the reaction tRNA(Pro) + L-proline + ATP = L-prolyl-tRNA(Pro) + AMP + diphosphate. In terms of biological role, catalyzes the attachment of proline to tRNA(Pro) in a two-step reaction: proline is first activated by ATP to form Pro-AMP and then transferred to the acceptor end of tRNA(Pro). This chain is Proline--tRNA ligase, found in Picrophilus torridus (strain ATCC 700027 / DSM 9790 / JCM 10055 / NBRC 100828 / KAW 2/3).